The chain runs to 246 residues: Ribonuclease 3 (246 aa).

An RNase III domain is found at Leu10–Gly143. Mg(2+) is bound at residue Glu56. The active site involves Asp60. Mg(2+) is bound by residues Asn129 and Glu132. Residue Glu132 is part of the active site. One can recognise a DRBM domain in the interval Asp170–Glu239.

It belongs to the ribonuclease III family. In terms of assembly, homodimer. Mg(2+) serves as cofactor.

It is found in the cytoplasm. The enzyme catalyses Endonucleolytic cleavage to 5'-phosphomonoester.. Functionally, digests double-stranded RNA. Involved in the processing of primary rRNA transcript to yield the immediate precursors to the large and small rRNAs (23S and 16S). Processes some mRNAs, and tRNAs when they are encoded in the rRNA operon. Processes pre-crRNA and tracrRNA of type II CRISPR loci if present in the organism. The chain is Ribonuclease 3 from Magnetococcus marinus (strain ATCC BAA-1437 / JCM 17883 / MC-1).